Consider the following 198-residue polypeptide: Holliday junction branch migration complex subunit RuvA (198 aa).

The tract at residues 1 to 64 (MYEYIKGEYM…EDFIGLYGFE (64 aa)) is domain I. The segment at 65–143 (SLEELEMFKM…TDELLNCIDE (79 aa)) is domain II. Residues 144–154 (FDDVTQDNSLA) form a flexible linker region. Positions 154-198 (AVSEALSALISLGYTEKEAEKVLRDVDKSESVENIIKSALVKLMG) are domain III.

This sequence belongs to the RuvA family. Homotetramer. Forms an RuvA(8)-RuvB(12)-Holliday junction (HJ) complex. HJ DNA is sandwiched between 2 RuvA tetramers; dsDNA enters through RuvA and exits via RuvB. An RuvB hexamer assembles on each DNA strand where it exits the tetramer. Each RuvB hexamer is contacted by two RuvA subunits (via domain III) on 2 adjacent RuvB subunits; this complex drives branch migration. In the full resolvosome a probable DNA-RuvA(4)-RuvB(12)-RuvC(2) complex forms which resolves the HJ.

The protein localises to the cytoplasm. In terms of biological role, the RuvA-RuvB-RuvC complex processes Holliday junction (HJ) DNA during genetic recombination and DNA repair, while the RuvA-RuvB complex plays an important role in the rescue of blocked DNA replication forks via replication fork reversal (RFR). RuvA specifically binds to HJ cruciform DNA, conferring on it an open structure. The RuvB hexamer acts as an ATP-dependent pump, pulling dsDNA into and through the RuvAB complex. HJ branch migration allows RuvC to scan DNA until it finds its consensus sequence, where it cleaves and resolves the cruciform DNA. In Clostridium botulinum (strain Eklund 17B / Type B), this protein is Holliday junction branch migration complex subunit RuvA.